A 266-amino-acid polypeptide reads, in one-letter code: Transcription regulator FGM4 (266 aa).

Residues 17–36 (KTQNRLAKRKSRIHAGKQQG) form a disordered region. Basic residues predominate over residues 18 to 31 (TQNRLAKRKSRIHA). 2 ANK repeats span residues 183 to 212 (KPGS…NVNE) and 216 to 245 (AGYS…DWSY).

It is found in the nucleus. In terms of biological role, transcription regulator; part of the Fg3_54/C64 gene cluster that mediates the biosynthesis of the octapeptide fusaoctaxin A, a virulence factor that is required for cell-to-cell invasiveness of plant host. Positively regulates the expression the Fg3_54/C64 gene cluster. This chain is Transcription regulator FGM4, found in Gibberella zeae (strain ATCC MYA-4620 / CBS 123657 / FGSC 9075 / NRRL 31084 / PH-1) (Wheat head blight fungus).